Here is a 159-residue protein sequence, read N- to C-terminus: Vesicle transport protein SFT2A (159 aa).

Over 1–36 (MEKLRRVLSGQDDEEQGLTAQVLDASSLSFNTRLKW) the chain is Cytoplasmic. Phosphoserine is present on S9. A helical transmembrane segment spans residues 37-57 (FAICFVCGVFFSILGTGLLWL). Residues 58 to 62 (PGGIK) are Lumenal-facing. Residues 63–83 (LFAVFYTLGNLAALASTCFLM) traverse the membrane as a helical segment. At 84 to 97 (GPVKQLKKMFEATR) the chain is on the cytoplasmic side. Residues 98 to 118 (LLATIVMLLCFIFTLCAALWW) form a helical membrane-spanning segment. Over 119-122 (HKKG) the chain is Lumenal. The chain crosses the membrane as a helical span at residues 123–143 (LAVLFCILQFLSMTWYSLSYI). Topologically, residues 144 to 159 (PYARDAVIKCCSSLLS) are cytoplasmic.

It belongs to the SFT2 family.

The protein resides in the membrane. Its function is as follows. May be involved in fusion of retrograde transport vesicles derived from an endocytic compartment with the Golgi complex. The polypeptide is Vesicle transport protein SFT2A (Homo sapiens (Human)).